A 107-amino-acid chain; its full sequence is Glutaredoxin-1 (107 aa).

Ala2 is modified (N-acetylalanine). Residues 3 to 106 (QEFVNCKIQS…TRLKQIGALQ (104 aa)) form the Glutaredoxin domain. N6-succinyllysine is present on Lys9. 2 disulfides stabilise this stretch: Cys23–Cys26 and Cys79–Cys83.

Belongs to the glutaredoxin family.

The protein resides in the cytoplasm. Functionally, has a glutathione-disulfide oxidoreductase activity in the presence of NADPH and glutathione reductase. Reduces low molecular weight disulfides and proteins. In Mus musculus (Mouse), this protein is Glutaredoxin-1 (Glrx).